The following is a 220-amino-acid chain: Phosphopantothenoylcysteine decarboxylase (220 aa).

Residues 29–31 (GSV) and 54–56 (TKA) each bind FMN. His-91 (proton donor) is an active-site residue. Residues 107 to 110 (SANT) and Ala-141 each bind FMN. N-[(R)-4-phosphopantothenoyl]-L-cysteine contacts are provided by Asn-143, Arg-173, and Ala-175. Catalysis depends on Cys-176, which acts as the Proton donor. N-[(R)-4-phosphopantothenoyl]-L-cysteine is bound at residue Met-184.

This sequence belongs to the HFCD (homooligomeric flavin containing Cys decarboxylase) superfamily. Forms homotrimers. Interacts with HIP1. Interacts with HD1 in the dark. Requires FMN as cofactor. As to expression, expressed in root meristem, shoot apical meristem (SAM), intercalary meristem, floral meristem, embryo and tip of the coleoptile before true leaf emergence.

It is found in the nucleus. The catalysed reaction is N-[(R)-4-phosphopantothenoyl]-L-cysteine + H(+) = (R)-4'-phosphopantetheine + CO2. It participates in cofactor biosynthesis; coenzyme A biosynthesis; CoA from (R)-pantothenate: step 3/5. Its function is as follows. Catalyzes the decarboxylation of 4'-phosphopantothenoylcysteine to 4'-phosphopantetheine, a key step in coenzyme A biosynthesis. Involved in salt and osmotic tolerance, and light-regulated plant growth. Trimerization of HAL3 recruits and activates the E3 ubiquitin-protein ligase HIP1, which leads to the degradation of cell cycle suppressors, resulting in enhancement of cell division and plant growth. HAL3 function in cell division seems to be independent from its PPC decarboxylase activity. Acts as a positive regulator of flowering by binding to HD1 in the dark. The sequence is that of Phosphopantothenoylcysteine decarboxylase from Oryza sativa subsp. japonica (Rice).